The following is a 111-amino-acid chain: Translation initiation factor 1A 1 (111 aa).

Residues 1–26 are disordered; sequence MTLADLKKPTSRATPSTEETFTRVRT. Positions 22–96 constitute an S1-like domain; that stretch reads TRVRTPRREN…EKADVIWKYT (75 aa).

This sequence belongs to the eIF-1A family.

Seems to be required for maximal rate of protein biosynthesis. Enhances ribosome dissociation into subunits and stabilizes the binding of the initiator Met-tRNA(I) to 40 S ribosomal subunits. This is Translation initiation factor 1A 1 (eIF1A1) from Methanosarcina acetivorans (strain ATCC 35395 / DSM 2834 / JCM 12185 / C2A).